A 185-amino-acid polypeptide reads, in one-letter code: Pyruvate/ketoisovalerate oxidoreductases common subunit gamma (185 aa).

In terms of assembly, heterotetramer of one alpha, one beta, one delta and one gamma chain.

The catalysed reaction is 2 oxidized [2Fe-2S]-[ferredoxin] + pyruvate + CoA = 2 reduced [2Fe-2S]-[ferredoxin] + acetyl-CoA + CO2 + H(+). It carries out the reaction 3-methyl-2-oxobutanoate + 2 oxidized [2Fe-2S]-[ferredoxin] + CoA = 2-methylpropanoyl-CoA + 2 reduced [2Fe-2S]-[ferredoxin] + CO2 + H(+). This Thermococcus litoralis (strain ATCC 51850 / DSM 5473 / JCM 8560 / NS-C) protein is Pyruvate/ketoisovalerate oxidoreductases common subunit gamma (porG).